The sequence spans 321 residues: Lipoyl synthase (321 aa).

[4Fe-4S] cluster contacts are provided by cysteine 68, cysteine 73, cysteine 79, cysteine 94, cysteine 98, cysteine 101, and serine 308. Residues 80 to 297 (FNHGTATFMI…KEEALAMGFT (218 aa)) form the Radical SAM core domain.

The protein belongs to the radical SAM superfamily. Lipoyl synthase family. [4Fe-4S] cluster is required as a cofactor.

It localises to the cytoplasm. The catalysed reaction is [[Fe-S] cluster scaffold protein carrying a second [4Fe-4S](2+) cluster] + N(6)-octanoyl-L-lysyl-[protein] + 2 oxidized [2Fe-2S]-[ferredoxin] + 2 S-adenosyl-L-methionine + 4 H(+) = [[Fe-S] cluster scaffold protein] + N(6)-[(R)-dihydrolipoyl]-L-lysyl-[protein] + 4 Fe(3+) + 2 hydrogen sulfide + 2 5'-deoxyadenosine + 2 L-methionine + 2 reduced [2Fe-2S]-[ferredoxin]. The protein operates within protein modification; protein lipoylation via endogenous pathway; protein N(6)-(lipoyl)lysine from octanoyl-[acyl-carrier-protein]: step 2/2. Its function is as follows. Catalyzes the radical-mediated insertion of two sulfur atoms into the C-6 and C-8 positions of the octanoyl moiety bound to the lipoyl domains of lipoate-dependent enzymes, thereby converting the octanoylated domains into lipoylated derivatives. The polypeptide is Lipoyl synthase (Photorhabdus laumondii subsp. laumondii (strain DSM 15139 / CIP 105565 / TT01) (Photorhabdus luminescens subsp. laumondii)).